The following is a 99-amino-acid chain: Transposase InsE for insertion sequence IS3A (99 aa).

Residues 1–21 form a disordered region; sequence MTKTVSTSKKPRKQHSPEFRS.

The protein belongs to the transposase 8 family.

Its function is as follows. Involved in the transposition of the insertion sequence IS3. In Escherichia coli (strain K12), this protein is Transposase InsE for insertion sequence IS3A (insE1).